A 120-amino-acid polypeptide reads, in one-letter code: Seripauperin-24 (120 aa).

The first 20 residues, M1–A20, serve as a signal peptide directing secretion.

Belongs to the SRP1/TIP1 family. Seripauperin subfamily. O-glycosylated.

The protein localises to the secreted. Its subcellular location is the cell wall. In terms of biological role, component of the cell wall. The polypeptide is Seripauperin-24 (PAU24) (Saccharomyces cerevisiae (strain ATCC 204508 / S288c) (Baker's yeast)).